Consider the following 572-residue polypeptide: MTIHQLINERVQAALAAAGAPDAPAVVQPASKPEFGDYQANGVMGAAKALKTNPRALAEKVVAALDLAGIADKVEIAGPGFINIHLAPEYLARRSEAALKDDKLGIAPVKPLRVMVEYSSPNLAKEMHVGHLRSSIIGDALARVMEYVGHDVVRANHVGDWGTQFGMLVAYLVETRHAGDADLQLSDLETFYRNAKIRFDESEDFANTARDYVVKLQGGDEEVLKLWRQFVDVSLKHCEDVYEKLNVGLKREHVRGESSYNDDLPVIVQELREKGLLTEDDGAQVVFLDEFRTQEDKPMGVIVQKKDGGFIYTTTDIGAVRYRHRELKLDRVIYVVDARQSQHFAQMFTICRKAGFAPEAMKLEHVGFGVMMGDDGKPFKTRSGGTVKLIELLNEAEERAYALVSEKNPDLSDAQKREIANAVGIGAVKYADLSKNRMSDYIFNWDTMLAFEGNTAPYLQYAYTRVQSVFRKAEDYDANARIVITEPAEKQLAAALAQFEDTLNSVVEGCYPHYLSLYLYQIATLFSRFYEACPILKSEGEVRASRLQLAALTAKTLRTGLDLLGIKVLESM.

Positions 121–131 (PNLAKEMHVGH) match the 'HIGH' region motif.

It belongs to the class-I aminoacyl-tRNA synthetase family. As to quaternary structure, monomer.

The protein localises to the cytoplasm. The enzyme catalyses tRNA(Arg) + L-arginine + ATP = L-arginyl-tRNA(Arg) + AMP + diphosphate. In Chromobacterium violaceum (strain ATCC 12472 / DSM 30191 / JCM 1249 / CCUG 213 / NBRC 12614 / NCIMB 9131 / NCTC 9757 / MK), this protein is Arginine--tRNA ligase.